The chain runs to 104 residues: Large ribosomal subunit protein uL24 (104 aa).

This sequence belongs to the universal ribosomal protein uL24 family. In terms of assembly, part of the 50S ribosomal subunit.

Its function is as follows. One of two assembly initiator proteins, it binds directly to the 5'-end of the 23S rRNA, where it nucleates assembly of the 50S subunit. In terms of biological role, one of the proteins that surrounds the polypeptide exit tunnel on the outside of the subunit. The polypeptide is Large ribosomal subunit protein uL24 (Enterobacter sp. (strain 638)).